A 505-amino-acid chain; its full sequence is Tyrosine-protein kinase Blk (505 aa).

Positions 1–37 (MGLVSSKKPDKEKPIKEKDKGQWSPLKVSAQDKDAPP) are disordered. Gly2 carries N-myristoyl glycine lipidation. Positions 7–21 (KKPDKEKPIKEKDKG) are enriched in basic and acidic residues. Positions 58–118 (EDKHFVVALY…PSNFVARVES (61 aa)) constitute an SH3 domain. An SH2 domain is found at 124-220 (WFFRSQGRKE…GLCQRLTLPC (97 aa)). Residues 241–494 (LRLVRKLGSG…FLQSVLEDFY (254 aa)) enclose the Protein kinase domain. ATP is bound by residues 247–255 (LGSGQFGEV) and Lys269. Catalysis depends on Asp360, which acts as the Proton acceptor. Tyr389 is subject to Phosphotyrosine; by autocatalysis.

This sequence belongs to the protein kinase superfamily. Tyr protein kinase family. SRC subfamily. Interacts with CBL (via SH2 domain). Interacts with CD79A and CD79B (via SH2 domain). Post-translationally, phosphorylated on tyrosine residues after antibody-mediated surface engagement of the B-cell antigen receptor (BCR). Ubiquitination of activated BLK by the UBE3A ubiquitin protein ligase leads to its degradation by the ubiquitin-proteasome pathway. As to expression, expressed in lymphatic organs, pancreatic islets, Leydig cells, striate ducts of salivary glands and hair follicles.

The protein localises to the cell membrane. It carries out the reaction L-tyrosyl-[protein] + ATP = O-phospho-L-tyrosyl-[protein] + ADP + H(+). Antibody-mediated surface engagement of the B-cell antigen receptor (BCR) which results in the phosphorylation of BLK on tyrosine residues, stimulates the enzymatic activity. In terms of biological role, non-receptor tyrosine kinase involved in B-lymphocyte development, differentiation and signaling. B-cell receptor (BCR) signaling requires a tight regulation of several protein tyrosine kinases and phosphatases, and associated coreceptors. Binding of antigen to the B-cell antigen receptor (BCR) triggers signaling that ultimately leads to B-cell activation. Signaling through BLK plays an important role in transmitting signals through surface immunoglobulins and supports the pro-B to pre-B transition, as well as the signaling for growth arrest and apoptosis downstream of B-cell receptor. Specifically binds and phosphorylates CD79A at 'Tyr-188'and 'Tyr-199', as well as CD79B at 'Tyr-196' and 'Tyr-207'. Also phosphorylates the immunoglobulin G receptors FCGR2A, FCGR2B and FCGR2C. With FYN and LYN, plays an essential role in pre-B-cell receptor (pre-BCR)-mediated NF-kappa-B activation. Also contributes to BTK activation by indirectly stimulating BTK intramolecular autophosphorylation. In pancreatic islets, acts as a modulator of beta-cells function through the up-regulation of PDX1 and NKX6-1 and consequent stimulation of insulin secretion in response to glucose. Phosphorylates CGAS, promoting retention of CGAS in the cytosol. The chain is Tyrosine-protein kinase Blk (BLK) from Homo sapiens (Human).